The chain runs to 258 residues: 5'-nucleotidase SurE (258 aa).

Residues Asp-9, Asp-10, Ser-40, and Asn-95 each contribute to the a divalent metal cation site.

It belongs to the SurE nucleotidase family. The cofactor is a divalent metal cation.

The protein localises to the cytoplasm. The catalysed reaction is a ribonucleoside 5'-phosphate + H2O = a ribonucleoside + phosphate. Functionally, nucleotidase that shows phosphatase activity on nucleoside 5'-monophosphates. In Nitratiruptor sp. (strain SB155-2), this protein is 5'-nucleotidase SurE.